The following is a 425-amino-acid chain: Stabilizer of axonemal microtubules 4 (425 aa).

Disordered stretches follow at residues 93–126, 203–225, and 316–335; these read PLEVPDGKHPLPWSMRQTSSGYGREKPSAGPPTK, EGSGFTKQSHQSPIVFQPPSQAL, and KEPTGFSLNNPMYVRSPCDP. Residues 207-222 show a composition bias toward polar residues; that stretch reads FTKQSHQSPIVFQPPS.

Microtubule inner protein component of sperm flagellar doublet microtubules. Interacts with PPP1CA.

The protein resides in the cell projection. Its subcellular location is the cilium. It is found in the cytoplasm. It localises to the cytoskeleton. The protein localises to the flagellum axoneme. This is Stabilizer of axonemal microtubules 4 from Homo sapiens (Human).